The following is a 99-amino-acid chain: Large ribosomal subunit protein bL28 (99 aa).

It belongs to the bacterial ribosomal protein bL28 family.

This chain is Large ribosomal subunit protein bL28, found in Caulobacter vibrioides (strain ATCC 19089 / CIP 103742 / CB 15) (Caulobacter crescentus).